The following is a 664-amino-acid chain: Intraflagellar transport protein 70A2 (664 aa).

TPR repeat units follow at residues 11 to 44, 45 to 78, 153 to 186, 188 to 220, 395 to 423, 424 to 456, and 458 to 491; these read DGEF…SSRS, RAGL…HPEL, PDGL…SGYQ, DVSY…GIRQ, QVQE…EKYI, PVLM…CNDH, and VWKL…NYDN. A coiled-coil region spans residues 507–534; sequence YIMTSQNEEAEELMRKIEKEEEQLSYGD. A TPR 8 repeat occupies 543–576; sequence CIVNLVIGTLYCAKGNYDFGISRVIKSLEPYHKK.

Belongs to the TTC30/dfy-1/fleer family. As to quaternary structure, interacts wit the IFT B complex component IFT52.

The protein localises to the cell projection. It localises to the cilium. Functionally, required for polyglutamylation of axonemal tubulin. Plays a role in anterograde intraflagellar transport (IFT), the process by which cilia precursors are transported from the base of the cilium to the site of their incorporation at the tip. This chain is Intraflagellar transport protein 70A2 (Ift70a2), found in Mus musculus (Mouse).